Here is an 81-residue protein sequence, read N- to C-terminus: Small ribosomal subunit protein bS16 (81 aa).

This sequence belongs to the bacterial ribosomal protein bS16 family.

The sequence is that of Small ribosomal subunit protein bS16 from Agathobacter rectalis (strain ATCC 33656 / DSM 3377 / JCM 17463 / KCTC 5835 / VPI 0990) (Eubacterium rectale).